The primary structure comprises 347 residues: Serpentine receptor class beta-2 (347 aa).

A run of 7 helical transmembrane segments spans residues 27 to 47, 62 to 82, 108 to 128, 146 to 166, 194 to 214, 246 to 266, and 288 to 308; these read IAQL…YIFL, FLLV…AFLF, GNLS…GFSI, FLGP…LYHV, FWEL…FLLV, LIVS…TIFV, and ITVP…LSFM.

This sequence belongs to the nematode receptor-like protein srb family.

The protein localises to the membrane. This is Serpentine receptor class beta-2 (srb-2) from Caenorhabditis elegans.